A 242-amino-acid chain; its full sequence is Cysteine desulfuration protein SufE (242 aa).

The active-site Cysteine persulfide intermediate is the Cys-148.

This sequence belongs to the SufE family. In terms of assembly, monomer. Interacts with SufS; interaction enhances cysteine desulfurase activity of SufS.

The protein resides in the plastid. It is found in the apicoplast. It participates in cofactor biosynthesis; iron-sulfur cluster biosynthesis. Its function is as follows. Participates in sulfur mobilization (SUF) pathway for iron-sulfur (Fe-S) cluster biogenesis. Enhances cysteine desulfurase activity of SufS. Probably functions as a sulfur acceptor for SufS. The sequence is that of Cysteine desulfuration protein SufE from Plasmodium vivax.